Here is a 56-residue protein sequence, read N- to C-terminus: uncharacterized protein (56 aa).

This is an uncharacterized protein from Dictyostelium discoideum (Social amoeba).